Reading from the N-terminus, the 95-residue chain is Co-chaperonin GroES (95 aa).

Belongs to the GroES chaperonin family. In terms of assembly, heptamer of 7 subunits arranged in a ring. Interacts with the chaperonin GroEL.

The protein resides in the cytoplasm. Together with the chaperonin GroEL, plays an essential role in assisting protein folding. The GroEL-GroES system forms a nano-cage that allows encapsulation of the non-native substrate proteins and provides a physical environment optimized to promote and accelerate protein folding. GroES binds to the apical surface of the GroEL ring, thereby capping the opening of the GroEL channel. This Rickettsia prowazekii (strain Madrid E) protein is Co-chaperonin GroES.